The sequence spans 145 residues: DnaJ homolog subfamily B member 3 (145 aa).

The J domain maps to 1–69 (MVDYYEVLDV…KKRDIYDRYG (69 aa)).

In terms of tissue distribution, expressed in sperm (at protein level).

May operate as a co-chaperone of the male germ cell- and haploid stage-specific Hsp70 proteins. This chain is DnaJ homolog subfamily B member 3 (DNAJB3), found in Homo sapiens (Human).